A 113-amino-acid chain; its full sequence is UPF0342 protein SEQ_0993 (113 aa).

The protein belongs to the UPF0342 family.

The sequence is that of UPF0342 protein SEQ_0993 from Streptococcus equi subsp. equi (strain 4047).